Here is a 290-residue protein sequence, read N- to C-terminus: 4-hydroxybenzoate octaprenyltransferase (290 aa).

The next 8 membrane-spanning stretches (helical) occupy residues 21 to 41, 44 to 64, 97 to 117, 143 to 163, 168 to 188, 211 to 231, 235 to 255, and 270 to 290; these read IGTMLLLWPCLMALLLAADGM, LRVLIIFIIGVVVMRACGCII, LFVVLGLFAFSLVLLLNPLVV, FLGVVWSWSIPMAYAAQTGEV, WWLFAANWCWTVAYDTMYAMV, EIIGAFQLAALGCFIAAGWSG, LLYGLGVLTFVGFSAYQQRLI, and NNWAGLSLFLALGADYAFAAL.

This sequence belongs to the UbiA prenyltransferase family. The cofactor is Mg(2+).

Its subcellular location is the cell inner membrane. It carries out the reaction all-trans-octaprenyl diphosphate + 4-hydroxybenzoate = 4-hydroxy-3-(all-trans-octaprenyl)benzoate + diphosphate. It participates in cofactor biosynthesis; ubiquinone biosynthesis. Its function is as follows. Catalyzes the prenylation of para-hydroxybenzoate (PHB) with an all-trans polyprenyl group. Mediates the second step in the final reaction sequence of ubiquinone-8 (UQ-8) biosynthesis, which is the condensation of the polyisoprenoid side chain with PHB, generating the first membrane-bound Q intermediate 3-octaprenyl-4-hydroxybenzoate. This Shewanella amazonensis (strain ATCC BAA-1098 / SB2B) protein is 4-hydroxybenzoate octaprenyltransferase.